We begin with the raw amino-acid sequence, 666 residues long: DNA ligase (666 aa).

Residues 34-38 (DAEYD), 83-84 (SL), and Glu-114 each bind NAD(+). The N6-AMP-lysine intermediate role is filled by Lys-116. The NAD(+) site is built by Arg-137, Glu-171, Lys-286, and Lys-310. Residues Cys-404, Cys-407, Cys-422, and Cys-427 each coordinate Zn(2+). The BRCT domain occupies 588 to 666 (NTESTISEKS…EEFFAILKGE (79 aa)).

The protein belongs to the NAD-dependent DNA ligase family. LigA subfamily. It depends on Mg(2+) as a cofactor. Mn(2+) serves as cofactor.

It carries out the reaction NAD(+) + (deoxyribonucleotide)n-3'-hydroxyl + 5'-phospho-(deoxyribonucleotide)m = (deoxyribonucleotide)n+m + AMP + beta-nicotinamide D-nucleotide.. In terms of biological role, DNA ligase that catalyzes the formation of phosphodiester linkages between 5'-phosphoryl and 3'-hydroxyl groups in double-stranded DNA using NAD as a coenzyme and as the energy source for the reaction. It is essential for DNA replication and repair of damaged DNA. This chain is DNA ligase, found in Mesoplasma florum (strain ATCC 33453 / NBRC 100688 / NCTC 11704 / L1) (Acholeplasma florum).